Reading from the N-terminus, the 160-residue chain is Putative antiporter subunit mnhE2 (160 aa).

The next 3 helical transmembrane spans lie at 22 to 42, 55 to 75, and 100 to 120; these read HFKFSTFFSGYLIGLIVIYIL, IWVAIKFLGVYLYQLITSSIS, and SDWSITFLTILIIITPGSTVI.

This sequence belongs to the CPA3 antiporters (TC 2.A.63) subunit E family. In terms of assembly, may form a heterooligomeric complex that consists of seven subunits: mnhA2, mnhB2, mnhC2, mnhD2, mnhE2, mnhF2 and mnhG2.

Its subcellular location is the cell membrane. The chain is Putative antiporter subunit mnhE2 (mnhE2) from Staphylococcus aureus (strain USA300).